Here is a 369-residue protein sequence, read N- to C-terminus: Ribonuclease D (369 aa).

The 3'-5' exonuclease domain maps to 1 to 166 (MITTNDALAA…PIAHKLMEQV (166 aa)). An HRDC domain is found at 206 to 285 (RPRQLACLKL…AQAQALLEDA (80 aa)).

This sequence belongs to the RNase D family. The cofactor is a divalent metal cation.

It localises to the cytoplasm. It carries out the reaction Exonucleolytic cleavage that removes extra residues from the 3'-terminus of tRNA to produce 5'-mononucleotides.. Functionally, exonuclease involved in the 3' processing of various precursor tRNAs. Initiates hydrolysis at the 3'-terminus of an RNA molecule and releases 5'-mononucleotides. In Cronobacter turicensis (strain DSM 18703 / CCUG 55852 / LMG 23827 / z3032), this protein is Ribonuclease D.